Reading from the N-terminus, the 69-residue chain is Pleurain-A2 (69 aa).

The first 22 residues, 1–22 (MFTLKKTLLLLYFLGTISISLC), serve as a signal peptide directing secretion. The propeptide occupies 23–43 (KQERDADEDDGRKMTEEEVKR). Cysteine 63 and cysteine 69 are disulfide-bonded.

As to expression, expressed by the skin glands.

It localises to the secreted. Its function is as follows. Antimicrobial peptide. Has activity against the Gram-positive bacterium S.aureus ATCC2592 (MIC=15 ug/ml), the Gram-negative bacteria E.coli ATCC25922 (MIC=60 ug/ml), B.dysenteriae (MIC=60 ug/ml), H.pylori NTCT11637 (MIC=30 ug/ml), and the fungus C.albicans ATCC2002 (MIC=30 ug/ml). Has little hemolytic activity on rabbit red blood cells. In Nidirana pleuraden (Yunnan pond frog), this protein is Pleurain-A2.